Here is a 24-residue protein sequence, read N- to C-terminus: Outer membrane protein (24 aa).

It belongs to the Gram-negative porin family. In terms of assembly, homotrimer.

The protein resides in the cell outer membrane. Forms pores that allow passive diffusion of small molecules across the outer membrane. In Sodalis glossinidius, this protein is Outer membrane protein.